The primary structure comprises 514 residues: Maturase K (514 aa).

Belongs to the intron maturase 2 family. MatK subfamily.

It is found in the plastid. Its subcellular location is the chloroplast. Its function is as follows. Usually encoded in the trnK tRNA gene intron. Probably assists in splicing its own and other chloroplast group II introns. The sequence is that of Maturase K from Dioon spinulosum (Gum palm).